The following is a 204-amino-acid chain: FMN-dependent NADH:quinone oxidoreductase (204 aa).

FMN-binding positions include Ser9, 15–17 (SVS), and 97–100 (MYNF).

It belongs to the azoreductase type 1 family. Homodimer. The cofactor is FMN.

It carries out the reaction 2 a quinone + NADH + H(+) = 2 a 1,4-benzosemiquinone + NAD(+). The catalysed reaction is N,N-dimethyl-1,4-phenylenediamine + anthranilate + 2 NAD(+) = 2-(4-dimethylaminophenyl)diazenylbenzoate + 2 NADH + 2 H(+). Its function is as follows. Quinone reductase that provides resistance to thiol-specific stress caused by electrophilic quinones. Functionally, also exhibits azoreductase activity. Catalyzes the reductive cleavage of the azo bond in aromatic azo compounds to the corresponding amines. This chain is FMN-dependent NADH:quinone oxidoreductase, found in Methylobacterium radiotolerans (strain ATCC 27329 / DSM 1819 / JCM 2831 / NBRC 15690 / NCIMB 10815 / 0-1).